The primary structure comprises 138 residues: Small ribosomal subunit protein bS6 (138 aa).

Residues 94-138 (VKQDGPLPTPKPTSKEDETEKEEVKPTEDKTESPAQEEKKEDSKE) are disordered. The span at 106–138 (TSKEDETEKEEVKPTEDKTESPAQEEKKEDSKE) shows a compositional bias: basic and acidic residues.

Belongs to the bacterial ribosomal protein bS6 family.

Functionally, binds together with bS18 to 16S ribosomal RNA. The protein is Small ribosomal subunit protein bS6 of Prochlorococcus marinus (strain NATL1A).